The primary structure comprises 204 residues: Bombinin-like peptides 1 (204 aa).

Positions 1–16 form a signal peptide, or 18; sequence MNFKYIVAVSILIASA. Residues N70 and N133 each carry the asparagine amide modification.

The protein belongs to the bombinin family. In terms of tissue distribution, expressed by the skin glands.

The protein resides in the secreted. Functionally, has antimicrobial activity, but no hemolytic activity. Preference on killing Gram-negative non-enteric bacteria. The polypeptide is Bombinin-like peptides 1 (Bombina orientalis (Oriental fire-bellied toad)).